A 707-amino-acid polypeptide reads, in one-letter code: Polyribonucleotide nucleotidyltransferase (707 aa).

The Mg(2+) site is built by Asp487 and Asp493. The region spanning Pro554–Ile613 is the KH domain. The S1 motif domain occupies Gly623–Lys691.

Belongs to the polyribonucleotide nucleotidyltransferase family. Mg(2+) is required as a cofactor.

It is found in the cytoplasm. It catalyses the reaction RNA(n+1) + phosphate = RNA(n) + a ribonucleoside 5'-diphosphate. Involved in mRNA degradation. Catalyzes the phosphorolysis of single-stranded polyribonucleotides processively in the 3'- to 5'-direction. This chain is Polyribonucleotide nucleotidyltransferase, found in Bacillus velezensis (strain DSM 23117 / BGSC 10A6 / LMG 26770 / FZB42) (Bacillus amyloliquefaciens subsp. plantarum).